We begin with the raw amino-acid sequence, 554 residues long: Bifunctional epoxide hydrolase 2 (554 aa).

The segment at 1–224 (MALRVAAFDL…KVTGTQFPEA (224 aa)) is phosphatase. Residues Asp-9 and Asp-11 each coordinate Mg(2+). Lys-55 carries the N6-succinyllysine modification. Residue 123-124 (TN) participates in phosphate binding. Lys-176 is subject to N6-acetyllysine; alternate. Lys-176 is subject to N6-succinyllysine; alternate. Asp-185 provides a ligand contact to Mg(2+). 2 positions are modified to N6-acetyllysine: Lys-191 and Lys-215. The tract at residues 233–554 (NDVSHGYVTV…VQNPSVTSKI (322 aa)) is epoxide hydrolase. The AB hydrolase-1 domain occupies 257 to 530 (PALCLCHGFP…CGHWTQIEKP (274 aa)). The active-site Nucleophile is Asp-333. Ser-368 carries the phosphoserine modification. Lys-371 carries the N6-succinyllysine modification. Tyr-381 is a substrate binding site. An N6-succinyllysine mark is found at Lys-420 and Lys-454. The active-site Proton donor is Tyr-465. Residue Lys-504 is modified to N6-succinyllysine. Residue Lys-508 is modified to N6-acetyllysine; alternate. The residue at position 508 (Lys-508) is an N6-succinyllysine; alternate. The S-(15-deoxy-Delta12,14-prostaglandin J2-9-yl)cysteine moiety is linked to residue Cys-521. His-523 serves as the catalytic Proton acceptor. The Microbody targeting signal signature appears at 552-554 (SKI). Lys-553 is modified (N6-succinyllysine).

Belongs to the AB hydrolase superfamily. Epoxide hydrolase family. As to quaternary structure, homodimer. It depends on Mg(2+) as a cofactor. Post-translationally, the N-terminus is blocked. The covalent modification of cysteine by 15-deoxy-Delta12,14-prostaglandin-J2 is autocatalytic and reversible. It may occur as an alternative to other cysteine modifications, such as S-nitrosylation and S-palmitoylation. As to expression, detected in liver, intestine, ovary and kidney. Detected at low levels in heart and muscle.

It is found in the cytoplasm. The protein resides in the peroxisome. It catalyses the reaction an epoxide + H2O = an ethanediol. The enzyme catalyses (9S,10S)-10-hydroxy-9-(phosphooxy)octadecanoate + H2O = (9S,10S)-9,10-dihydroxyoctadecanoate + phosphate. The catalysed reaction is 8-hydroxy-(11S,12S)-epoxy-(5Z,9E,14Z)-eicosatrienoate + H2O = (8,11R,12S)-trihydroxy-(5Z,9E,14Z)-eicosatrienoate. It carries out the reaction 10-hydroxy-(11S,12S)-epoxy- (5Z,8Z,14Z)-eicosatrienoate + H2O = (10,11S,12R)-trihydroxy-(5Z,8Z,14Z)-eicosatrienoate. It catalyses the reaction (8S,9R)-epoxy-(5Z,11Z,14Z)-eicosatrienoate + H2O = (8S,9S)-dihydroxy-(5Z,11Z,14Z)-eicosatrienoate. The enzyme catalyses (11S,12R)-epoxy-(5Z,8Z,14Z)-eicosatrienoate + H2O = (11R,12R)-dihydroxy-(5Z,8Z,14Z)-eicosatrienoate. The catalysed reaction is (11S,12R)-epoxy-(5Z,8Z,14Z)-eicosatrienoate + H2O = (11S,12S)-dihydroxy-(5Z,8Z,14Z)-eicosatrienoate. It carries out the reaction (14S,15R)-epoxy-(5Z,8Z,11Z)-eicosatrienoate + H2O = (14R,15R)-dihydroxy-(5Z,8Z,11Z)-eicosatrienoate. It catalyses the reaction (14S,15R)-epoxy-(5Z,8Z,11Z)-eicosatrienoate + H2O = (14S,15S)-dihydroxy-(5Z,8Z,11Z)-eicosatrienoate. The enzyme catalyses (11R,12S)-epoxy-(5Z,8Z,14Z)-eicosatrienoate + H2O = (11S,12S)-dihydroxy-(5Z,8Z,14Z)-eicosatrienoate. The catalysed reaction is (11R,12S)-epoxy-(5Z,8Z,14Z)-eicosatrienoate + H2O = (11R,12R)-dihydroxy-(5Z,8Z,14Z)-eicosatrienoate. It carries out the reaction (8S,9R)-epoxy-(5Z,11Z,14Z)-eicosatrienoate + H2O = (8R,9R)-dihydroxy-(5Z,11Z,14Z)-eicosatrienoate. It catalyses the reaction 12-phosphooxy-(9Z)-octadecenoate + H2O = 12-hydroxy-(9Z)-octadecenoate + phosphate. The enzyme catalyses 12-phosphooxy-(9E)-octadecenoate + H2O = 12-hydroxy-(9E)-octadecenoate + phosphate. The catalysed reaction is 12-(phosphooxy)octadecanoate + H2O = 12-hydroxyoctadecanoate + phosphate. It carries out the reaction 8,9-epoxy-(5Z,11Z,14Z)-eicosatrienoate + H2O = 8,9-dihydroxy-(5Z,11Z,14Z)-eicosatrienoate. It catalyses the reaction 11,12-epoxy-(5Z,8Z,14Z)-eicosatrienoate + H2O = 11,12-dihydroxy-(5Z,8Z,14Z)-eicosatrienoate. The enzyme catalyses 14,15-epoxy-(5Z,8Z,11Z)-eicosatrienoate + H2O = 14,15-dihydroxy-(5Z,8Z,11Z)-eicosatrienoate. The catalysed reaction is 9,10-epoxy-(12Z)-octadecenoate + H2O = 9,10-dihydroxy-(12Z)-octadecenoate. It carries out the reaction 1-tetradecanoyl-sn-glycerol 3-phosphate + H2O = 1-tetradecanoyl-sn-glycerol + phosphate. It catalyses the reaction 1-octadecanoyl-sn-glycero-3-phosphate + H2O = 1-octadecanoyl-sn-glycerol + phosphate. The enzyme catalyses 1-(5Z,8Z,11Z,14Z-eicosatetraenoyl)-sn-glycero-3-phosphate + H2O = 1-(5Z,8Z,11Z,14Z-eicosatetraenoyl)-sn-glycerol + phosphate. The catalysed reaction is 1-hexadecanoyl-sn-glycero-3-phosphate + H2O = 1-hexadecanoyl-sn-glycerol + phosphate. It carries out the reaction 1-(9Z-octadecenoyl)-sn-glycero-3-phosphate + H2O = 1-(9Z-octadecenoyl)-sn-glycerol + phosphate. It catalyses the reaction (14R,15S)-epoxy-(5Z,8Z,11Z)-eicosatrienoate + H2O = (14R,15R)-dihydroxy-(5Z,8Z,11Z)-eicosatrienoate. Its activity is regulated as follows. Inhibited by 1-(1-acetylpiperidin-4-yl)-3-(4-(trifl uoromethoxy)phenyl)urea (TPAU), 1-cyclohexyl-3-dodecylurea (CDU), 12-(3-adamantan-1-yl-ureido)-dodecanoic acid (AUDA), 1-((3S, 5S, 7S)-adamantan-1-yl)-3-(5-(2-(2-ethoxyethoxy) ethoxy)pentyl)urea (AEPU), N-adamantyl-N[']-cyclohexyl urea (ACU), 4-(((1S, 4S)-4-(3-((3S, 5S, 7S)-adamantan-1-yl) ureido)cyclohexyl)oxy)benzoic acid (c-AUCB), 4-(((1R, 4R)-4-(3-((3S, 5S, 7S)-adamantan-1-yl)ureido)cyclohexyl)oxy)benzoic acid (t-AUCB), 4-(((1R, 4R)-4-(3-(4(trifluoromethoxy)phenyl)ureido)cyclohexyl)oxy)benzoic acid (t-TAUCB) and to a lesser extent by 8-(3-((3S, 5S, 7S)-adamantan-1-yl)ureido) octanoic acid (AUOA). Phosphatase activity is inhibited by dodecyl-phosphate, phospholipids such as phospho-lysophosphatidic acids and fatty acids such as palmitic acid and lauric acid. In terms of biological role, bifunctional enzyme. The C-terminal domain has epoxide hydrolase activity and acts on epoxides (alkene oxides, oxiranes) and arene oxides. Plays a role in xenobiotic metabolism by degrading potentially toxic epoxides. Also determines steady-state levels of physiological mediators. Functionally, bifunctional enzyme. The N-terminal domain has lipid phosphatase activity, with the highest activity towards threo-9,10-phosphonooxy-hydroxy-octadecanoic acid, followed by erythro-9,10-phosphonooxy-hydroxy-octadecanoic acid, 12-phosphonooxy-octadec-9Z-enoic acid and 12-phosphonooxy-octadec-9E-enoic acid. Has phosphatase activity toward lyso-glycerophospholipids with also some lower activity toward lysolipids of sphingolipid and isoprenoid phosphates. This chain is Bifunctional epoxide hydrolase 2, found in Mus musculus (Mouse).